The sequence spans 198 residues: Angiopoietin-like protein 8 (198 aa).

An N-terminal signal peptide occupies residues 1-15 (MAVLALCLLWTLASA).

This sequence belongs to the ANGPTL8 family. In terms of assembly, interacts with ANGPTL3. Post-translationally, proteolytically cleaved at the N-terminus. As to expression, expressed in liver and fat. Enriched in white and brown adipose tissues.

The protein resides in the secreted. Hormone that acts as a blood lipid regulator by regulating serum triglyceride levels. May be involved in the metabolic transition between fasting and refeeding: required to direct fatty acids to adipose tissue for storage in the fed state. According to a report, may act by promoting ANGPTL3 cleavage. According to another study, not required for cleavage of ANGPTL3. In Mus musculus (Mouse), this protein is Angiopoietin-like protein 8.